A 134-amino-acid chain; its full sequence is uncharacterized protein (134 aa).

The region spanning 10 to 70 (KETRQRIIDA…AVLASRQHPL (61 aa)) is the HTH tetR-type domain. A DNA-binding region (H-T-H motif) is located at residues 33-52 (TLDQIARKAGVTRGAVYWHF).

Functionally, unknown, does not seem to be involved in regulation of the ttgGHI or ttgVW operons. This is an uncharacterized protein from Pseudomonas putida (strain DOT-T1E).